The primary structure comprises 269 residues: Meiotically up-regulated gene 43 protein (269 aa).

Its subcellular location is the mitochondrion. Its function is as follows. Has a role in meiosis. The polypeptide is Meiotically up-regulated gene 43 protein (mug43) (Schizosaccharomyces pombe (strain 972 / ATCC 24843) (Fission yeast)).